The following is a 114-amino-acid chain: uncharacterized protein (114 aa).

Residues 7–27 (YIFSFWFFFLVEYVVTFRLFL) traverse the membrane as a helical segment. A disordered region spans residues 90 to 114 (KNSPEKKKFKRGLPISSKYTDGKKR).

Its subcellular location is the membrane. This is an uncharacterized protein from Saccharomyces cerevisiae (strain ATCC 204508 / S288c) (Baker's yeast).